The chain runs to 614 residues: Zinc metalloproteinase-disintegrin-like BmMP (614 aa).

The signal sequence occupies residues Met-1–Ser-20. Positions Ile-21–Ala-188 are excised as a propeptide. N-linked (GlcNAc...) asparagine glycosylation occurs at Asn-187. The Peptidase M12B domain maps to Lys-205–Pro-401. 17 disulfides stabilise this stretch: Cys-316–Cys-396, Cys-356–Cys-380, Cys-359–Cys-364, Cys-412–Cys-441, Cys-423–Cys-436, Cys-425–Cys-431, Cys-435–Cys-458, Cys-449–Cys-455, Cys-454–Cys-480, Cys-467–Cys-487, Cys-474–Cys-506, Cys-499–Cys-511, Cys-518–Cys-568, Cys-533–Cys-576, Cys-546–Cys-556, Cys-563–Cys-602, and Cys-596–Cys-607. His-341 contacts Zn(2+). The active site involves Glu-342. Zn(2+) is bound by residues His-345 and His-351. One can recognise a Disintegrin domain in the interval Pro-409–Asn-495. The D/ECD-tripeptide motif lies at Asp-473 to Asp-475.

Belongs to the venom metalloproteinase (M12B) family. P-III subfamily. P-IIIa sub-subfamily. As to quaternary structure, monomer. Requires Zn(2+) as cofactor. Expressed by the venom gland.

It localises to the secreted. Its function is as follows. Snake venom zinc metalloproteinase that inhibits platelet aggregation and degrades fibrinogen. This Bungarus multicinctus (Many-banded krait) protein is Zinc metalloproteinase-disintegrin-like BmMP.